Consider the following 549-residue polypeptide: Glucose-6-phosphate isomerase (549 aa).

N6-acetyllysine is present on residues Lys80, Lys228, and Lys234. Catalysis depends on Glu355, which acts as the Proton donor. Active-site residues include His386 and Lys514.

The protein belongs to the GPI family.

The protein resides in the cytoplasm. The enzyme catalyses alpha-D-glucose 6-phosphate = beta-D-fructose 6-phosphate. The protein operates within carbohydrate biosynthesis; gluconeogenesis. It functions in the pathway carbohydrate degradation; glycolysis; D-glyceraldehyde 3-phosphate and glycerone phosphate from D-glucose: step 2/4. In terms of biological role, catalyzes the reversible isomerization of glucose-6-phosphate to fructose-6-phosphate. This chain is Glucose-6-phosphate isomerase, found in Shigella boydii serotype 4 (strain Sb227).